Reading from the N-terminus, the 1135-residue chain is uncharacterized protein (1135 aa).

The signal sequence occupies residues 1–28; sequence MALFPRGILIALVLSFVLNLGLVTKIHA. 7 helical membrane-spanning segments follow: residues 332–352, 359–379, 393–413, 495–515, 522–542, 555–575, and 700–720; these read IVTA…LLAG, EYIN…GINI, MIQW…NWVM, MLVS…AFMV, MISI…FLFA, MISF…MFAV, and IKNI…MYNF.

The protein belongs to the TrbL/VirB6 family.

The protein resides in the cell membrane. This is an uncharacterized protein from Rickettsia typhi (strain ATCC VR-144 / Wilmington).